Consider the following 148-residue polypeptide: MVGSPRAPLLLLASLIVALALALAVSPAAAQGPRKGRLLGGLMEADVNEEGVQEALSFAVSEFNKRSNDAYQSRVVRVVRARKQVVSGMNYFLDVELGRTTCTKSQANLDSCPFHNQPHLKREKLCSFQVYVVPWMNTINLVKFSCQD.

A signal peptide spans Met1 to Ala30. The residue at position 31 (Gln31) is a Pyrrolidone carboxylic acid. Positions Gln84–Gly88 match the Secondary area of contact motif. 2 disulfide bridges follow: Cys102–Cys112 and Cys126–Cys146.

It localises to the secreted. In terms of biological role, this is a thiol proteinase inhibitor. The protein is Cystatin-C (CST3) of Bos taurus (Bovine).